The primary structure comprises 691 residues: Histone-lysine N-methyltransferase Set8 (691 aa).

The interval 1 to 29 (MIMVRRRQRPAKEAASSSSGGASSGSGIP) is disordered. A compositionally biased stretch (low complexity) spans 14–27 (AASSSSGGASSGSG). Residues S195 and S250 each carry the phosphoserine modification. T252 is subject to Phosphothreonine. At S281 the chain carries Phosphoserine. Disordered regions lie at residues 341-363 (TANTESPAGQPRRRKPATPHRIL), 382-401 (GSADPLSPRKSPRKLPTTTA), 407-437 (KSRRRLNQPKPQAPYQPQLQKPPSQQQQQQQ), and 464-516 (AEER…ATNG). T344 is subject to Phosphothreonine. Phosphoserine is present on residues S346, S383, S388, and S392. 2 stretches are compositionally biased toward polar residues: residues 421–430 (YQPQLQKPPS) and 471–481 (NKAPATANSNK). An SET domain is found at 555–676 (DGLQVRHFMG…PGEELTYDYG (122 aa)). Residues 565 to 567 (KGR), Y610, and 637 to 638 (NH) contribute to the S-adenosyl-L-methionine site.

This sequence belongs to the class V-like SAM-binding methyltransferase superfamily. Histone-lysine methyltransferase family. PR/SET subfamily.

Its subcellular location is the nucleus. The protein resides in the chromosome. It carries out the reaction L-lysyl(20)-[histone H4] + S-adenosyl-L-methionine = N(6)-methyl-L-lysyl(20)-[histone H4] + S-adenosyl-L-homocysteine + H(+). Its function is as follows. Histone methyltransferase that specifically monomethylates 'Lys-20' of histone H4. H4 'Lys-20' monomethylation is enriched during mitosis and represents a specific tag for epigenetic transcriptional repression. Mainly functions in euchromatin regions, thereby playing a central role in the silencing of euchromatic genes. Required for cell proliferation, possibly by contributing to the maintenance of proper higher-order structure of DNA and chromosome condensation during mitosis. The sequence is that of Histone-lysine N-methyltransferase Set8 from Drosophila melanogaster (Fruit fly).